We begin with the raw amino-acid sequence, 266 residues long: Phosphoethanolamine N-methyltransferase (266 aa).

Gln18 provides a ligand contact to phosphoethanolamine. Tyr19 is a catalytic residue. Tyr27 contributes to the phosphoethanolamine binding site. Positions 36, 37, 63, 85, 86, 110, 111, and 127 each coordinate S-adenosyl-L-methionine. The active site involves His132. Positions 160, 175, 179, 181, and 247 each coordinate phosphoethanolamine.

It belongs to the class I-like SAM-binding methyltransferase superfamily. PEAMT family. Monomer.

It is found in the golgi apparatus membrane. Its subcellular location is the cytoplasm. The catalysed reaction is phosphoethanolamine + S-adenosyl-L-methionine = N-methylethanolamine phosphate + S-adenosyl-L-homocysteine + H(+). It catalyses the reaction N-methylethanolamine phosphate + S-adenosyl-L-methionine = N,N-dimethylethanolamine phosphate + S-adenosyl-L-homocysteine + H(+). The enzyme catalyses N,N-dimethylethanolamine phosphate + S-adenosyl-L-methionine = phosphocholine + S-adenosyl-L-homocysteine + H(+). It functions in the pathway phospholipid metabolism; phosphatidylcholine biosynthesis; phosphocholine from phosphoethanolamine. Inhibited by phosphocholine. Inhibited by hexadecylphosphocholine (miltefosine). Inhibited by S-adenosyl-l-homocysteine. Weakly inhibited in vitro by amodiaquine, chloroquine and primaquine. Inhibited by NSC-158011. Catalyzes N-methylation of phosphoethanolamine, phosphomonomethylethanolamine and phosphodimethylethanolamine, the three methylation steps required to convert phosphoethanolamine to phosphocholine. Has no ethanolamine- or phosphatidylethanolamine-N-methyltransferase activity. Required for gametocyte development, maturation and transmission to mosquitoes and for oocyst formation in the mosquito midgut. This chain is Phosphoethanolamine N-methyltransferase, found in Plasmodium falciparum (isolate 3D7).